The chain runs to 37 residues: Large ribosomal subunit protein bL36c (37 aa).

This sequence belongs to the bacterial ribosomal protein bL36 family.

It is found in the plastid. Its subcellular location is the chloroplast. The sequence is that of Large ribosomal subunit protein bL36c from Cyanidioschyzon merolae (strain NIES-3377 / 10D) (Unicellular red alga).